The primary structure comprises 150 residues: Con-Ins Im1 (150 aa).

The first 25 residues, 1-25 (MATSLLSPLLVAMLGFLLHVHVARA), serve as a signal peptide directing secretion. 4 disulfides stabilise this stretch: cysteine 31-cysteine 133, cysteine 46-cysteine 136, cysteine 58-cysteine 149, and cysteine 135-cysteine 140. Positions 64-111 (GYAGGQRQLRKRTSMIDSDDMEAEGGSRGGFLMSKRRALSYLQKETNP) are cleaved as a propeptide — c peptide. At glutamate 144 the chain carries 4-carboxyglutamate; partial.

It belongs to the insulin family. Heterodimer of A and B chains; disulfide-linked. As to expression, expressed by the venom gland.

Its subcellular location is the secreted. In terms of biological role, this venom insulin facilitates prey capture by rapidly inducing hypoglycemic shock. Intraperitoneal injection of this peptide into zebrafish lowers blood glucose with the same potency than human insulin. In vivo, when applied to water, this peptide reduces overall locomotor activity of zebrafish larvae, observed as a significant decrease in the percentage of time spent swimming and movement frequency. This is Con-Ins Im1 from Conus imperialis (Imperial cone).